Here is a 512-residue protein sequence, read N- to C-terminus: Protein singed (512 aa).

It belongs to the fascin family. Interacts with Rab35, with stronger binding to the Rab35-GTP form compared to the Rab35-GDP form.

It is found in the cytoplasm. Its subcellular location is the cytoskeleton. Functionally, acts as an actin bundling protein. May have a role in the asymmetric organization and/or movement of cytoplasmic components. It has a role in somatic cells during the formation of adult bristles and hairs, and in the female germline during oogenesis. The chain is Protein singed (sn) from Drosophila melanogaster (Fruit fly).